The sequence spans 382 residues: Galactokinase (382 aa).

Residue 34 to 37 (EHTD) participates in substrate binding. 124–130 (GAGLSSS) contacts ATP. 2 residues coordinate Mg(2+): Ser130 and Glu162. Asp174 (proton acceptor) is an active-site residue. Tyr223 lines the substrate pocket.

The protein belongs to the GHMP kinase family. GalK subfamily.

The protein localises to the cytoplasm. The enzyme catalyses alpha-D-galactose + ATP = alpha-D-galactose 1-phosphate + ADP + H(+). Its pathway is carbohydrate metabolism; galactose metabolism. In terms of biological role, catalyzes the transfer of the gamma-phosphate of ATP to D-galactose to form alpha-D-galactose-1-phosphate (Gal-1-P). This is Galactokinase from Escherichia coli O7:K1 (strain IAI39 / ExPEC).